A 732-amino-acid polypeptide reads, in one-letter code: X-ray repair cross-complementing protein 5 (732 aa).

The 223-residue stretch at 9–231 (AVVLCMDVGF…DEIYSFSESL (223 aa)) folds into the VWFA domain. Positions 138 to 165 (LSSRFSKSQLDIIIHSLKKCDISLQFFL) are leucine-zipper. Lysine 144 carries the N6-acetyllysine modification. Lysine 195 participates in a covalent cross-link: Glycyl lysine isopeptide (Lys-Gly) (interchain with G-Cter in SUMO2). One can recognise a Ku domain in the interval 253–452 (IGSNLSIRIA…KYAPTEAQLN (200 aa)). Phosphoserine is present on residues serine 255 and serine 258. An N6-acetyllysine modification is found at lysine 265. Serine 318 carries the post-translational modification Phosphoserine. Position 332 is an N6-acetyllysine (lysine 332). Glycyl lysine isopeptide (Lys-Gly) (interchain with G-Cter in SUMO2) cross-links involve residues lysine 532 and lysine 534. Position 535 is a phosphothreonine (threonine 535). Glycyl lysine isopeptide (Lys-Gly) (interchain with G-Cter in SUMO2) cross-links involve residues lysine 566 and lysine 568. Phosphoserine; by PRKDC occurs at positions 577, 579, and 580. 2 positions are modified to N6-acetyllysine: lysine 660 and lysine 665. Glycyl lysine isopeptide (Lys-Gly) (interchain with G-Cter in SUMO2) cross-links involve residues lysine 669 and lysine 688. Threonine 715 is subject to Phosphothreonine; by PRKDC. The short motif at 720–728 (EEGGDVDDL) is the EEXXXDL motif element.

The protein belongs to the ku80 family. Heterodimer composed of XRCC5/Ku80 and XRCC6/Ku70; heterodimerization stabilizes XRCC5 protein. Component of the core long-range non-homologous end joining (NHEJ) complex (also named DNA-PK complex) composed of PRKDC, LIG4, XRCC4, XRCC6/Ku70, XRCC5/Ku86 and NHEJ1/XLF. Additional component of the NHEJ complex includes PAXX. Following autophosphorylation, PRKDC dissociates from DNA, leading to formation of the short-range NHEJ complex, composed of LIG4, XRCC4, XRCC6/Ku70, XRCC5/Ku86 and NHEJ1/XLF. The XRCC5-XRCC6 dimer also associates with NAA15, and this complex displays DNA binding activity towards the osteocalcin FGF response element (OCFRE). In addition, XRCC5 binds to the osteoblast-specific transcription factors MSX2 and RUNX2. Interacts with ELF3. Interacts with APLF (via KBM motif). The XRCC5/XRCC6 dimer associates in a DNA-dependent manner with APEX1. Identified in a complex with DEAF1 and XRCC6. Interacts with NR4A3; the DNA-dependent protein kinase complex DNA-PK phosphorylates and activates NR4A3 and prevents NR4A3 ubiquitinylation and degradation. Interacts with RNF138. Interacts with CYREN isoform 1 (CYREN-1) and isoform 4 (CYREN-2) (via KBM motif). Interacts with WRN (via KBM motif). Interacts (via N-terminus) with HSF1 (via N-terminus); this interaction is direct and prevents XRCC5/XRCC6 heterodimeric binding and non-homologous end joining (NHEJ) repair activities induced by ionizing radiation (IR). Interacts with DHX9; this interaction occurs in a RNA-dependent manner. Part of the HDP-RNP complex composed of at least HEXIM1, PRKDC, XRCC5, XRCC6, paraspeckle proteins (SFPQ, NONO, PSPC1, RBM14, and MATR3) and NEAT1 RNA. Interacts with ERCC6. The XRCC5-XRCC6 dimer associates with ALKBH2. Interacts with TPRN; TPRN interacts with a number of DNA damage response proteins, is recruited to sites of DNA damage and may play a role in DNA damage repair. Interacts with ERCC6L2. In terms of assembly, (Microbial infection) Interacts with human T-cell leukemia virus 1/HTLV-1 protein HBZ. In terms of processing, ADP-ribosylated by PARP3. Phosphorylated on serine residues. Phosphorylation by PRKDC may enhance helicase activity. Post-translationally, sumoylated. In terms of processing, ubiquitinated by RNF8 via 'Lys-48'-linked ubiquitination following DNA damage, leading to its degradation and removal from DNA damage sites. Ubiquitinated by RNF138, leading to remove the Ku complex from DNA breaks.

The protein localises to the nucleus. The protein resides in the nucleolus. It is found in the chromosome. Its function is as follows. Single-stranded DNA-dependent ATP-dependent helicase that plays a key role in DNA non-homologous end joining (NHEJ) by recruiting DNA-PK to DNA. Required for double-strand break repair and V(D)J recombination. Also has a role in chromosome translocation. The DNA helicase II complex binds preferentially to fork-like ends of double-stranded DNA in a cell cycle-dependent manner. It works in the 3'-5' direction. During NHEJ, the XRCC5-XRRC6 dimer performs the recognition step: it recognizes and binds to the broken ends of the DNA and protects them from further resection. Binding to DNA may be mediated by XRCC6. The XRCC5-XRRC6 dimer acts as a regulatory subunit of the DNA-dependent protein kinase complex DNA-PK by increasing the affinity of the catalytic subunit PRKDC to DNA by 100-fold. The XRCC5-XRRC6 dimer is probably involved in stabilizing broken DNA ends and bringing them together. The assembly of the DNA-PK complex to DNA ends is required for the NHEJ ligation step. The XRCC5-XRRC6 dimer probably also acts as a 5'-deoxyribose-5-phosphate lyase (5'-dRP lyase), by catalyzing the beta-elimination of the 5' deoxyribose-5-phosphate at an abasic site near double-strand breaks. XRCC5 probably acts as the catalytic subunit of 5'-dRP activity, and allows to 'clean' the termini of abasic sites, a class of nucleotide damage commonly associated with strand breaks, before such broken ends can be joined. The XRCC5-XRRC6 dimer together with APEX1 acts as a negative regulator of transcription. In association with NAA15, the XRCC5-XRRC6 dimer binds to the osteocalcin promoter and activates osteocalcin expression. As part of the DNA-PK complex, involved in the early steps of ribosome assembly by promoting the processing of precursor rRNA into mature 18S rRNA in the small-subunit processome. Binding to U3 small nucleolar RNA, recruits PRKDC and XRCC5/Ku86 to the small-subunit processome. Plays a role in the regulation of DNA virus-mediated innate immune response by assembling into the HDP-RNP complex, a complex that serves as a platform for IRF3 phosphorylation and subsequent innate immune response activation through the cGAS-STING pathway. The sequence is that of X-ray repair cross-complementing protein 5 (XRCC5) from Homo sapiens (Human).